The chain runs to 198 residues: Armadillo repeat-containing protein 7 (198 aa).

ARM repeat units lie at residues 57–99 (QVLD…QAGG) and 100–140 (LPLI…TSLP). Residue serine 169 is modified to Phosphoserine.

Component of the minor spliceosome. Within this complex, interacts with RBM48.

Its function is as follows. As a component of the minor spliceosome, involved in the splicing of U12-type introns in pre-mRNAs. The sequence is that of Armadillo repeat-containing protein 7 (Armc7) from Mus musculus (Mouse).